Here is a 235-residue protein sequence, read N- to C-terminus: Ribosomal RNA small subunit methyltransferase G (235 aa).

S-adenosyl-L-methionine is bound by residues Gly-74, Phe-79, 97-99 (EAT), 125-126 (AE), and Arg-144.

It belongs to the methyltransferase superfamily. RNA methyltransferase RsmG family.

Its subcellular location is the cytoplasm. Specifically methylates the N7 position of a guanine in 16S rRNA. The protein is Ribosomal RNA small subunit methyltransferase G of Dehalococcoides mccartyi (strain ATCC BAA-2100 / JCM 16839 / KCTC 5957 / BAV1).